A 241-amino-acid polypeptide reads, in one-letter code: 3-deoxy-D-manno-octulosonic acid kinase (241 aa).

Asp171 is a catalytic residue.

Belongs to the protein kinase superfamily. KdkA/RfaP family.

Its subcellular location is the cell inner membrane. The enzyme catalyses an alpha-Kdo-(2-&gt;6)-lipid IVA + ATP = a 4-O-phospho-alpha-Kdo-(2-&gt;6)-lipid IVA + ADP + H(+). Its pathway is bacterial outer membrane biogenesis; LPS core biosynthesis. Functionally, catalyzes the ATP-dependent phosphorylation of the 3-deoxy-D-manno-octulosonic acid (Kdo) residue in Kdo-lipid IV(A) at the 4-OH position. This is 3-deoxy-D-manno-octulosonic acid kinase from Haemophilus influenzae (strain PittGG).